The chain runs to 147 residues: Large ribosomal subunit protein uL16 (147 aa).

This sequence belongs to the universal ribosomal protein uL16 family. Part of the 50S ribosomal subunit.

In terms of biological role, binds 23S rRNA and is also seen to make contacts with the A and possibly P site tRNAs. The chain is Large ribosomal subunit protein uL16 from Clostridium acetobutylicum (strain ATCC 824 / DSM 792 / JCM 1419 / IAM 19013 / LMG 5710 / NBRC 13948 / NRRL B-527 / VKM B-1787 / 2291 / W).